The primary structure comprises 206 residues: Small ribosomal subunit protein uS4 (206 aa).

The S4 RNA-binding domain occupies 94 to 157 (RRLDNVVYRL…RRRTYFKNLI (64 aa)).

It belongs to the universal ribosomal protein uS4 family. As to quaternary structure, part of the 30S ribosomal subunit. Contacts protein S5. The interaction surface between S4 and S5 is involved in control of translational fidelity.

Functionally, one of the primary rRNA binding proteins, it binds directly to 16S rRNA where it nucleates assembly of the body of the 30S subunit. Its function is as follows. With S5 and S12 plays an important role in translational accuracy. This Roseiflexus sp. (strain RS-1) protein is Small ribosomal subunit protein uS4.